An 89-amino-acid polypeptide reads, in one-letter code: MAITQERKNQLINEFKTHESDTGSPEVQIAILTDSINNLNEHLRTHKKDHHSRRGLLKMVGKRRNLLTYLRNKDVTRYRELINKLGLRR.

The segment covering 1-21 (MAITQERKNQLINEFKTHESD) has biased composition (basic and acidic residues). The interval 1-24 (MAITQERKNQLINEFKTHESDTGS) is disordered.

The protein belongs to the universal ribosomal protein uS15 family. Part of the 30S ribosomal subunit. Forms a bridge to the 50S subunit in the 70S ribosome, contacting the 23S rRNA.

In terms of biological role, one of the primary rRNA binding proteins, it binds directly to 16S rRNA where it helps nucleate assembly of the platform of the 30S subunit by binding and bridging several RNA helices of the 16S rRNA. Forms an intersubunit bridge (bridge B4) with the 23S rRNA of the 50S subunit in the ribosome. The chain is Small ribosomal subunit protein uS15 from Bacillus subtilis (strain 168).